A 354-amino-acid polypeptide reads, in one-letter code: D-alanine--D-alanine ligase (354 aa).

The ATP-grasp domain occupies 132 to 342 (KMVFERAGLP…FPSLVDRLLQ (211 aa)). 168 to 223 (EAQVGYPCFVKPANLGSSVGIAKVRNRSELEAALDNAASYDRRIIVEAGLTDIREV) is an ATP binding site. Mg(2+) contacts are provided by D295, E309, and N311.

This sequence belongs to the D-alanine--D-alanine ligase family. Requires Mg(2+) as cofactor. The cofactor is Mn(2+).

It localises to the cytoplasm. The catalysed reaction is 2 D-alanine + ATP = D-alanyl-D-alanine + ADP + phosphate + H(+). It functions in the pathway cell wall biogenesis; peptidoglycan biosynthesis. Its function is as follows. Cell wall formation. The chain is D-alanine--D-alanine ligase from Synechocystis sp. (strain ATCC 27184 / PCC 6803 / Kazusa).